The primary structure comprises 437 residues: MTPNTDLNIPLFERAKALIPGGVNSPVRAFKAVGGTPRFVKRARGAYFWDANDQRFIDYIGSWGPMILGHGHPAVLEAVQQAALEGLSFGAPTERELELAEAILRLLPSMQMIRLVSSGTEAGMSAIRLARGATGRSKLIKFEGCYHGHADALLVKAGSGLATFGNATSAGVPAEVVQHTLVLEYNSIEQLERAFALHGKELACLIIEPIAGNMNLVRASVPFMRRCRELCSEYGALLVLDEVMTGFRVAPGGAQSLYARDIPGFQPDLTVLGKVIGGGMPLAAFGGSRALMEHLAPLGAVYQAGTLSGNPVATACGLATLRAIGQPGFFAALSARTRALVEGLRGAAAAEGVAFSADSEGGMFGFFLLPALPRNYAQVLQTDSARFNQLFHGLLERGIYIAPALYEAGFVSAAHSDEDIAATVAAAREVFKTLAKP.

At Lys-274 the chain carries N6-(pyridoxal phosphate)lysine.

The protein belongs to the class-III pyridoxal-phosphate-dependent aminotransferase family. HemL subfamily. In terms of assembly, homodimer. It depends on pyridoxal 5'-phosphate as a cofactor.

It is found in the cytoplasm. The enzyme catalyses (S)-4-amino-5-oxopentanoate = 5-aminolevulinate. It functions in the pathway porphyrin-containing compound metabolism; protoporphyrin-IX biosynthesis; 5-aminolevulinate from L-glutamyl-tRNA(Glu): step 2/2. The protein is Glutamate-1-semialdehyde 2,1-aminomutase of Verminephrobacter eiseniae (strain EF01-2).